Here is a 60-residue protein sequence, read N- to C-terminus: Large ribosomal subunit protein bL32 (60 aa).

Positions 1–19 (MGVPKRKTSKGRRDKRRAH) are enriched in basic residues. The interval 1–20 (MGVPKRKTSKGRRDKRRAHL) is disordered.

The protein belongs to the bacterial ribosomal protein bL32 family.

The protein is Large ribosomal subunit protein bL32 of Syntrophobacter fumaroxidans (strain DSM 10017 / MPOB).